The following is an 83-amino-acid chain: RNA-binding protein Hfq (83 aa).

Residues 9–68 (DPFLNALRKERIPVSIYLVNGIKLQGQVESFDQFVILLKNTVSQMVYKHAISTVVPSRAL) form the Sm domain.

Belongs to the Hfq family. In terms of assembly, homohexamer.

Its function is as follows. RNA chaperone that binds small regulatory RNA (sRNAs) and mRNAs to facilitate mRNA translational regulation in response to envelope stress, environmental stress and changes in metabolite concentrations. Also binds with high specificity to tRNAs. The protein is RNA-binding protein Hfq of Pseudoalteromonas atlantica (strain T6c / ATCC BAA-1087).